We begin with the raw amino-acid sequence, 131 residues long: Large ribosomal subunit protein bL12 (131 aa).

Belongs to the bacterial ribosomal protein bL12 family. Homodimer. Part of the ribosomal stalk of the 50S ribosomal subunit. Forms a multimeric L10(L12)X complex, where L10 forms an elongated spine to which 2 to 4 L12 dimers bind in a sequential fashion. Binds GTP-bound translation factors.

Forms part of the ribosomal stalk which helps the ribosome interact with GTP-bound translation factors. Is thus essential for accurate translation. The polypeptide is Large ribosomal subunit protein bL12 (Prochlorococcus marinus (strain MIT 9515)).